The primary structure comprises 236 residues: LexA repressor (236 aa).

Residues 1 to 25 (MNDSNDTSVAGGAAGADSRVLSADS) form a disordered region. The H-T-H motif DNA-binding region spans 51-71 (IREIGDAVGLTSTSSVAHQLR). Active-site for autocatalytic cleavage activity residues include S160 and K197.

Belongs to the peptidase S24 family. Homodimer.

It carries out the reaction Hydrolysis of Ala-|-Gly bond in repressor LexA.. Functionally, represses a number of genes involved in the response to DNA damage (SOS response), including recA and lexA. In the presence of single-stranded DNA, RecA interacts with LexA causing an autocatalytic cleavage which disrupts the DNA-binding part of LexA, leading to derepression of the SOS regulon and eventually DNA repair. In Mycobacterium bovis (strain BCG / Pasteur 1173P2), this protein is LexA repressor.